Reading from the N-terminus, the 360-residue chain is MKPSIVAKLEALHERHEEVQALLGDAGIIADQDRFRALSREYAQLSDVSRCFTDWQQVQDDIETAQMMLDDPEMREMAQEELREAKEKSEQLEQQLQVLLLPKDPDDERNAFLEVRAGTGGDEAALFAGDLFRMYSRYAEARRWRVEIMSMSEGEHGGYKEIIAKISGDGVYGRLKFESGGHRVQRVPATESQGRIHTSACTVAVMPELPEAELPDINPADLRIDTFRSSGAGGQHVNTTDSAIRITHLPTGIVVECQDERSQHKNKAKALSVLGARIHAAETAKRQQAEASTRRNLLGSGDRSDRNRTYNFPQGRVTDHRINLTLYRLDETMEGKLDMLIEPIVQEHLADLLAALSEQE.

Q235 is modified (N5-methylglutamine). The interval 284–313 (AKRQQAEASTRRNLLGSGDRSDRNRTYNFP) is disordered.

This sequence belongs to the prokaryotic/mitochondrial release factor family. Post-translationally, methylated by PrmC. Methylation increases the termination efficiency of RF1.

It is found in the cytoplasm. Functionally, peptide chain release factor 1 directs the termination of translation in response to the peptide chain termination codons UAG and UAA. The sequence is that of Peptide chain release factor 1 from Salmonella gallinarum (strain 287/91 / NCTC 13346).